Reading from the N-terminus, the 235-residue chain is Octanoyltransferase (235 aa).

In terms of domain architecture, BPL/LPL catalytic spans 59-235 (PGSSQAVWLL…KKSLTERFGL (177 aa)). Substrate is bound by residues 101-108 (RGGEVTHH), 168-170 (SIG), and 181-183 (GLS). Cysteine 199 serves as the catalytic Acyl-thioester intermediate.

This sequence belongs to the LipB family.

Its subcellular location is the cytoplasm. It catalyses the reaction octanoyl-[ACP] + L-lysyl-[protein] = N(6)-octanoyl-L-lysyl-[protein] + holo-[ACP] + H(+). Its pathway is protein modification; protein lipoylation via endogenous pathway; protein N(6)-(lipoyl)lysine from octanoyl-[acyl-carrier-protein]: step 1/2. In terms of biological role, catalyzes the transfer of endogenously produced octanoic acid from octanoyl-acyl-carrier-protein onto the lipoyl domains of lipoate-dependent enzymes. Lipoyl-ACP can also act as a substrate although octanoyl-ACP is likely to be the physiological substrate. The polypeptide is Octanoyltransferase (Prochlorococcus marinus (strain MIT 9211)).